A 217-amino-acid chain; its full sequence is Small ribosomal subunit protein uS3 (217 aa).

Residues 38 to 106 form the KH type-2 domain; the sequence is IRKFINKELA…QVHINIIEIK (69 aa).

The protein belongs to the universal ribosomal protein uS3 family. In terms of assembly, part of the 30S ribosomal subunit. Forms a tight complex with proteins S10 and S14.

Functionally, binds the lower part of the 30S subunit head. Binds mRNA in the 70S ribosome, positioning it for translation. This is Small ribosomal subunit protein uS3 from Streptococcus pyogenes serotype M6 (strain ATCC BAA-946 / MGAS10394).